The sequence spans 99 residues: Putative septation protein SpoVG (99 aa).

This sequence belongs to the SpoVG family.

In terms of biological role, could be involved in septation. This Exiguobacterium sp. (strain ATCC BAA-1283 / AT1b) protein is Putative septation protein SpoVG.